A 365-amino-acid polypeptide reads, in one-letter code: tRNA/tmRNA (uracil-C(5))-methyltransferase (365 aa).

Gln189, Tyr217, Asn222, Glu238, and Asp298 together coordinate S-adenosyl-L-methionine. The Nucleophile role is filled by Cys323. Glu357 functions as the Proton acceptor in the catalytic mechanism.

The protein belongs to the class I-like SAM-binding methyltransferase superfamily. RNA M5U methyltransferase family. TrmA subfamily.

It carries out the reaction uridine(54) in tRNA + S-adenosyl-L-methionine = 5-methyluridine(54) in tRNA + S-adenosyl-L-homocysteine + H(+). The enzyme catalyses uridine(341) in tmRNA + S-adenosyl-L-methionine = 5-methyluridine(341) in tmRNA + S-adenosyl-L-homocysteine + H(+). Dual-specificity methyltransferase that catalyzes the formation of 5-methyluridine at position 54 (m5U54) in all tRNAs, and that of position 341 (m5U341) in tmRNA (transfer-mRNA). This is tRNA/tmRNA (uracil-C(5))-methyltransferase from Shewanella piezotolerans (strain WP3 / JCM 13877).